The chain runs to 172 residues: Mitochondrial import inner membrane translocase subunit Tim17-B (172 aa).

The cysteines at positions 9 and 78 are disulfide-linked. A run of 3 helical transmembrane segments spans residues 17 to 37 (CGGA…IKGF), 61 to 77 (QIGG…STID), and 113 to 133 (VGSA…GILL). The tract at residues 146-172 (PFLEDPSQLPPKDGTPAPGYPSYQQYH) is disordered.

This sequence belongs to the Tim17/Tim22/Tim23 family. Component of the TIM23 complex at least composed of TIMM23, TIMM17 (TIMM17A or TIMM17B) and TIMM50. The complex interacts with the TIMM44 component of the PAM complex and with DNAJC15. Post-translationally, forms one disulfide bond. Expression is abundant in heart and skeletal muscle, intermediate in brain, and weak in pancreas, placenta, kidney and liver.

It localises to the mitochondrion inner membrane. Functionally, essential component of the TIM23 complex, a complex that mediates the translocation of transit peptide-containing proteins across the mitochondrial inner membrane. The polypeptide is Mitochondrial import inner membrane translocase subunit Tim17-B (TIMM17B) (Homo sapiens (Human)).